The sequence spans 862 residues: Protein translocase subunit SecA (862 aa).

ATP is bound by residues glutamine 86, 104-108, and aspartate 499; that span reads GEGKT. The Zn(2+) site is built by cysteine 848, cysteine 850, cysteine 859, and histidine 860.

It belongs to the SecA family. In terms of assembly, monomer and homodimer. Part of the essential Sec protein translocation apparatus which comprises SecA, SecYEG and auxiliary proteins SecDF-YajC and YidC. It depends on Zn(2+) as a cofactor.

Its subcellular location is the cell inner membrane. It localises to the cytoplasm. The enzyme catalyses ATP + H2O + cellular proteinSide 1 = ADP + phosphate + cellular proteinSide 2.. In terms of biological role, part of the Sec protein translocase complex. Interacts with the SecYEG preprotein conducting channel. Has a central role in coupling the hydrolysis of ATP to the transfer of proteins into and across the cell membrane, serving both as a receptor for the preprotein-SecB complex and as an ATP-driven molecular motor driving the stepwise translocation of polypeptide chains across the membrane. In Ehrlichia chaffeensis (strain ATCC CRL-10679 / Arkansas), this protein is Protein translocase subunit SecA.